A 305-amino-acid chain; its full sequence is Auxin-responsive protein IAA27 (305 aa).

Positions 45-49 (LRLGL) match the EAR-like (transcriptional repression) motif. Disordered regions lie at residues 96–119 (TTAT…GKST) and 155–180 (KNSM…AKSG). Residues 155–170 (KNSMASSQSQKPGNNS) are compositionally biased toward polar residues. Residues 185 to 287 (CLYVKVSMEG…SCKKLRIMKS (103 aa)) form the PB1 domain.

It belongs to the Aux/IAA family. In terms of assembly, homodimers and heterodimers. Interacts with phytochrome A. Interacts with TPL.

The protein resides in the nucleus. Its function is as follows. Aux/IAA proteins are short-lived transcriptional factors that function as repressors of early auxin response genes at low auxin concentrations. Repression is thought to result from the interaction with auxin response factors (ARFs), proteins that bind to the auxin-responsive promoter element (AuxRE). Formation of heterodimers with ARF proteins may alter their ability to modulate early auxin response genes expression. This chain is Auxin-responsive protein IAA27 (IAA27), found in Arabidopsis thaliana (Mouse-ear cress).